A 66-amino-acid polypeptide reads, in one-letter code: ITYTDCTESGQNLCLCEGSNVCGKGNKCILGSQGKDNQCVTGEGTPKPQSHNQGDFEPIPEDAYDE.

The interval 1 to 3 (ITY) is interaction with thrombin active site. Cystine bridges form between C6–C14, C16–C28, and C22–C39. Positions 39-66 (CVTGEGTPKPQSHNQGDFEPIPEDAYDE) are disordered. Residue T45 is glycosylated (O-linked (GalNAc...) threonine). Residues 55-66 (DFEPIPEDAYDE) form an interaction with fibrinogen-binding exosite of thrombin region. Residue Y64 is modified to Sulfotyrosine.

This sequence belongs to the protease inhibitor I14 (hirudin) family.

It is found in the secreted. Hirudin is a potent thrombin-specific protease inhibitor. It forms a stable non-covalent complex with alpha-thrombin, thereby abolishing its ability to cleave fibrinogen. The chain is Hirudin-PA from Hirudo medicinalis (Medicinal leech).